A 190-amino-acid chain; its full sequence is Adenine phosphoribosyltransferase (190 aa).

This sequence belongs to the purine/pyrimidine phosphoribosyltransferase family. In terms of assembly, homodimer.

The protein resides in the cytoplasm. The catalysed reaction is AMP + diphosphate = 5-phospho-alpha-D-ribose 1-diphosphate + adenine. It participates in purine metabolism; AMP biosynthesis via salvage pathway; AMP from adenine: step 1/1. In terms of biological role, catalyzes a salvage reaction resulting in the formation of AMP, that is energically less costly than de novo synthesis. In Cupriavidus metallidurans (strain ATCC 43123 / DSM 2839 / NBRC 102507 / CH34) (Ralstonia metallidurans), this protein is Adenine phosphoribosyltransferase.